Consider the following 273-residue polypeptide: Protein BMH2 (273 aa).

Serine 2 is modified (N-acetylserine). Positions 236 to 273 (DISESGQEDQQQQQQQQQQQQQQQQQAPAEQTQGEPTK) are disordered. Residues 245-261 (QQQQQQQQQQQQQQQQQ) show a composition bias toward low complexity. The span at 262–273 (APAEQTQGEPTK) shows a compositional bias: polar residues.

Belongs to the 14-3-3 family. Interacts with NTH1 (via N-terminus when phosphorylated by PKA); the interaction is direct and activates NTH1. Interacts with FIN1.

The protein resides in the cytoplasm. It is found in the nucleus. The polypeptide is Protein BMH2 (BMH2) (Saccharomyces cerevisiae (strain ATCC 204508 / S288c) (Baker's yeast)).